The primary structure comprises 168 residues: Photosystem I assembly protein Ycf3 (168 aa).

TPR repeat units lie at residues 35-68 (AFTY…EIDP), 72-105 (SYIL…NPFL), and 120-153 (GEQA…TPGN).

This sequence belongs to the Ycf3 family.

It is found in the plastid. The protein resides in the chloroplast thylakoid membrane. In terms of biological role, essential for the assembly of the photosystem I (PSI) complex. May act as a chaperone-like factor to guide the assembly of the PSI subunits. The polypeptide is Photosystem I assembly protein Ycf3 (Acorus calamus var. americanus (American sweet flag)).